The primary structure comprises 241 residues: Histone H1-II (241 aa).

Residues 1–10 show a composition bias toward basic and acidic residues; sequence MASDAPEVKA. Disordered stretches follow at residues 1 to 27 and 89 to 241; these read MASD…THPP and NSYK…AKKA. The segment covering 11–20 has biased composition (basic residues); that stretch reads PKAKTQKKPK. Residues 24 to 95 enclose the H15 domain; that stretch reads THPPYIQMVT…KVKNSYKLSD (72 aa). Residues 99-111 are compositionally biased toward basic residues; that stretch reads SKAKAAAKPKAAP. 3 tandem repeats follow at residues 111–116, 117–122, and 123–128. An 8 X 6 AA repeats of P-K-K-A-[AK]-A region spans residues 111–217; sequence PKKAAAPKKA…KAATPKKAKA (107 aa). Positions 129-155 are enriched in basic and acidic residues; it reads PKKEGEKKAVKPKSEKKAAKPKTEKKP. Composition is skewed to basic residues over residues 156–184 and 194–241; these read KAAK…KATP and AAPK…AKKA. A DNA-binding region spans residues 183–186; the sequence is TPKK. A run of 5 repeats spans residues 184–189, 190–195, 196–201, 204–209, and 212–217. DNA-binding regions lie at residues 203–206 and 211–214; these read TPKK.

It belongs to the histone H1/H5 family.

The protein resides in the nucleus. It is found in the chromosome. Functionally, histones H1 are necessary for the condensation of nucleosome chains into higher-order structures. This Volvox carteri (Green alga) protein is Histone H1-II (H1-II).